The primary structure comprises 246 residues: Pyridoxine 5'-phosphate synthase (246 aa).

A 3-amino-2-oxopropyl phosphate-binding site is contributed by Asn12. 1-deoxy-D-xylulose 5-phosphate is bound at residue 14-15; the sequence is DH. 3-amino-2-oxopropyl phosphate is bound at residue Arg23. Catalysis depends on His48, which acts as the Proton acceptor. Arg50 and His55 together coordinate 1-deoxy-D-xylulose 5-phosphate. Glu75 acts as the Proton acceptor in catalysis. Thr105 provides a ligand contact to 1-deoxy-D-xylulose 5-phosphate. Residue His196 is the Proton donor of the active site. 3-amino-2-oxopropyl phosphate contacts are provided by residues Gly197 and 218–219; that span reads GH.

This sequence belongs to the PNP synthase family. As to quaternary structure, homooctamer; tetramer of dimers.

It is found in the cytoplasm. The enzyme catalyses 3-amino-2-oxopropyl phosphate + 1-deoxy-D-xylulose 5-phosphate = pyridoxine 5'-phosphate + phosphate + 2 H2O + H(+). It functions in the pathway cofactor biosynthesis; pyridoxine 5'-phosphate biosynthesis; pyridoxine 5'-phosphate from D-erythrose 4-phosphate: step 5/5. Catalyzes the complicated ring closure reaction between the two acyclic compounds 1-deoxy-D-xylulose-5-phosphate (DXP) and 3-amino-2-oxopropyl phosphate (1-amino-acetone-3-phosphate or AAP) to form pyridoxine 5'-phosphate (PNP) and inorganic phosphate. The polypeptide is Pyridoxine 5'-phosphate synthase (Pseudomonas syringae pv. syringae (strain B728a)).